The following is a 419-amino-acid chain: MSPLLLLLLCLLLGNLEPEEAKLIRVPLQRIHLGHRILNPLNGWEQLAELSRTSTSGGNPSFVPLSKFMNTQYFGTIGLGTPPQNFTVVFDTGSSNLWVPSTRCHFFSLACWFHHRFNPKASSSFRPNGTKFAIQYGTGRLSGILSQDNLTIGGIHDAFVTFGEALWEPSLIFALAHFDGILGLGFPTLAVGGVQPPLDAMVEQGLLEKPVFSFYLNRDSEGSDGGELVLGGSDPAHYVPPLTFIPVTIPAYWQVHMESVKVGTGLSLCAQGCSAILDTGTSLITGPSEEIRALNKAIGGYPFLNGQYFIQCSKTPTLPPVSFHLGGVWFNLTGQDYVIKILQSDVGLCLLGFQALDIPKPAGPLWILGDVFLGPYVAVFDRGDKNVGPRVGLARAQSRSTDRAERRTTQAQFFKRRPG.

The N-terminal stretch at 1–16 (MSPLLLLLLCLLLGNL) is a signal peptide. The region spanning 73–394 (YFGTIGLGTP…KNVGPRVGLA (322 aa)) is the Peptidase A1 domain. Asn-85 carries N-linked (GlcNAc...) asparagine glycosylation. Residue Asp-91 is part of the active site. An intrachain disulfide couples Cys-104 to Cys-111. N-linked (GlcNAc...) asparagine glycosylation is found at Asn-128 and Asn-149. An intrachain disulfide couples Cys-269 to Cys-273. Asp-278 is a catalytic residue. An intrachain disulfide couples Cys-312 to Cys-349. The N-linked (GlcNAc...) asparagine glycan is linked to Asn-331. The tract at residues 391–419 (VGLARAQSRSTDRAERRTTQAQFFKRRPG) is disordered.

It belongs to the peptidase A1 family. In terms of tissue distribution, expressed at the highest levels in the kidney, at a moderate level in the lung, and at low levels in the spleen and adipose tissue.

The protein localises to the secreted. Its function is as follows. May be involved in processing of pneumocyte surfactant precursors. The sequence is that of Napsin-A (Napsa) from Mus musculus (Mouse).